The chain runs to 126 residues: Ribosome-binding factor A (126 aa).

Belongs to the RbfA family. Monomer. Binds 30S ribosomal subunits, but not 50S ribosomal subunits or 70S ribosomes.

Its subcellular location is the cytoplasm. One of several proteins that assist in the late maturation steps of the functional core of the 30S ribosomal subunit. Associates with free 30S ribosomal subunits (but not with 30S subunits that are part of 70S ribosomes or polysomes). Required for efficient processing of 16S rRNA. May interact with the 5'-terminal helix region of 16S rRNA. This Histophilus somni (strain 129Pt) (Haemophilus somnus) protein is Ribosome-binding factor A.